Reading from the N-terminus, the 1148-residue chain is Protein pianissimo A (1148 aa).

Residues methionine 1–asparagine 34 show a composition bias toward low complexity. The interval methionine 1–serine 41 is disordered. The 112-residue stretch at lysine 803–histidine 914 folds into the N-terminal Ras-GEF domain.

Belongs to the RICTOR family. As to quaternary structure, part of a complex, TORC2, consisting of tor, lst8, piaA and ripA. Additional proteins, such as 14-3-3 and heat-shock proteins, may also belong to the TORC2 complex.

Its subcellular location is the cytoplasm. Its function is as follows. Regulates cell growth, chemotaxis, signal relay and the actin cytoskeleton. Required for chemoattractant receptor and G protein-mediated activation of the 12 transmembrane domain adenylyl cyclase. Functions as a part of protein complex TORC2. TORC2, is presumed to be indirectly negatively modulated by rapamycin and regulates actin polarization. TORC2, but not TORC1, negatively regulates phagocytosis. This protein and dagA protein CRAC, a cytosolic regulator, are both essential for activation of the enzyme adenylyl cyclase. This protein and CRAC do not function redundantly. Both proteins are integral components of the adenylyl cyclase activation pathway. In Dictyostelium discoideum (Social amoeba), this protein is Protein pianissimo A (piaA).